Here is a 268-residue protein sequence, read N- to C-terminus: TATA-box-binding protein (268 aa).

A compositionally biased stretch (polar residues) spans 1–24; that stretch reads MDSLTTHPATAQQARAFTSPSSLS. Residues 1–86 are disordered; sequence MDSLTTHPAT…TPAATPGASA (86 aa). Residues 50–86 show a composition bias toward low complexity; the sequence is NGQSANGNVNGQQQGANAANGNGVMPATPAATPGASA. 2 tandem repeats follow at residues 95–171 and 185–262.

It belongs to the TBP family. Belongs to the TFIID complex together with the TBP-associated factors (TAFs). Binds DNA as monomer.

The protein localises to the nucleus. General transcription factor that functions at the core of the DNA-binding multiprotein factor TFIID. Binding of TFIID to the TATA box is the initial transcriptional step of the pre-initiation complex (PIC), playing a role in the activation of eukaryotic genes transcribed by RNA polymerase II. The polypeptide is TATA-box-binding protein (tbpA) (Emericella nidulans (strain FGSC A4 / ATCC 38163 / CBS 112.46 / NRRL 194 / M139) (Aspergillus nidulans)).